Consider the following 300-residue polypeptide: Tyrosine recombinase XerC (300 aa).

The Core-binding (CB) domain occupies 2 to 88; sequence IQEGKLEQQF…SLRSFYTFLL (87 aa). The region spanning 109–294 is the Tyr recombinase domain; that stretch reads RLPKFFYSEE…TKEHLKSTYM (186 aa). Catalysis depends on residues Arg150, Lys174, His246, Arg249, and His272. The O-(3'-phospho-DNA)-tyrosine intermediate role is filled by Tyr281.

It belongs to the 'phage' integrase family. XerC subfamily. As to quaternary structure, forms a cyclic heterotetrameric complex composed of two molecules of XerC and two molecules of XerD.

It localises to the cytoplasm. Its function is as follows. Site-specific tyrosine recombinase, which acts by catalyzing the cutting and rejoining of the recombining DNA molecules. The XerC-XerD complex is essential to convert dimers of the bacterial chromosome into monomers to permit their segregation at cell division. It also contributes to the segregational stability of plasmids. This chain is Tyrosine recombinase XerC, found in Listeria monocytogenes serovar 1/2a (strain ATCC BAA-679 / EGD-e).